Consider the following 173-residue polypeptide: Alpha-crystallin A chain (173 aa).

The residue at position 1 (methionine 1) is an N-acetylmethionine. The segment at 1-63 is required for complex formation with BFSP1 and BFSP2; that stretch reads MDIAIQHPWF…RTVLDSGISE (63 aa). Glutamine 6 bears the Deamidated glutamine; partial mark. Phosphoserine is present on serine 45. Position 50 is a deamidated glutamine; partial (glutamine 50). Positions 52–162 constitute a sHSP domain; it reads LFRTVLDSGI…GHSERAIPVS (111 aa). The residue at position 70 (lysine 70) is an N6-acetyllysine. Glutamine 90 bears the Deamidated glutamine; partial mark. Lysine 99 is subject to N6-acetyllysine. Residue histidine 100 participates in Zn(2+) binding. Asparagine 101 carries the deamidated asparagine; partial modification. Zn(2+)-binding residues include glutamate 102 and histidine 107. At serine 122 the chain carries Phosphoserine. A Deamidated asparagine; partial modification is found at asparagine 123. The segment at 144 to 173 is disordered; that stretch reads PKIPSGMDAGHSERAIPVSREEKPGSAPSS. The segment covering 153-167 has biased composition (basic and acidic residues); that stretch reads GHSERAIPVSREEKP. Zn(2+) is bound at residue histidine 154. O-linked (GlcNAc) serine glycosylation occurs at serine 162.

The protein belongs to the small heat shock protein (HSP20) family. As to quaternary structure, heteromer composed of three CRYAA and one CRYAB subunits. Inter-subunit bridging via zinc ions enhances stability, which is crucial as there is no protein turn over in the lens. Can also form homodimers and homotetramers (dimers of dimers) which serve as the building blocks of homooligomers. Within homooligomers, the zinc-binding motif is created from residues of 3 different molecules. His-100 and Glu-102 from one molecule are ligands of the zinc ion, and His-107 and His-154 residues from additional molecules complete the site with tetrahedral coordination geometry. Part of a complex required for lens intermediate filament formation composed of BFSP1, BFSP2 and CRYAA. Acetylation at Lys-70 may increase chaperone activity. In terms of processing, undergoes age-dependent proteolytical cleavage at the C-terminus.

The protein resides in the cytoplasm. It is found in the nucleus. In terms of biological role, contributes to the transparency and refractive index of the lens. Acts as a chaperone, preventing aggregation of various proteins under a wide range of stress conditions. Required for the correct formation of lens intermediate filaments as part of a complex composed of BFSP1, BFSP2 and CRYAA. This Equus caballus (Horse) protein is Alpha-crystallin A chain (CRYAA).